We begin with the raw amino-acid sequence, 267 residues long: Staphylococcal secretory antigen ssaA2 (267 aa).

The N-terminal stretch at M1–A27 is a signal peptide. 7 tandem repeats follow at residues Y83–N85, Y86–N88, Y89–N91, Y95–N97, Y101–N103, Y104–N106, and Y113–N115. The interval Y83–N115 is 7 X 3 AA repeats of Y-[NS]-N. Residues M146–H267 enclose the Peptidase C51 domain.

It is found in the secreted. In terms of biological role, not known; immunogenic protein. This is Staphylococcal secretory antigen ssaA2 (ssaA2) from Staphylococcus aureus (strain NCTC 8325 / PS 47).